The following is a 231-amino-acid chain: Glutathione-S-transferase (231 aa).

Residues 15-98 enclose the GST N-terminal domain; sequence LFAVKGTATS…YIADAYDKDG (84 aa).

This sequence belongs to the GST superfamily.

The catalysed reaction is RX + glutathione = an S-substituted glutathione + a halide anion + H(+). Its function is as follows. Conjugation of reduced glutathione to a wide number of exogenous and endogenous hydrophobic electrophiles. The protein is Glutathione-S-transferase of Alternaria alternata (Alternaria rot fungus).